Consider the following 214-residue polypeptide: Probable transaldolase (214 aa).

Lysine 83 functions as the Schiff-base intermediate with substrate in the catalytic mechanism.

This sequence belongs to the transaldolase family. Type 3B subfamily.

It localises to the cytoplasm. The enzyme catalyses D-sedoheptulose 7-phosphate + D-glyceraldehyde 3-phosphate = D-erythrose 4-phosphate + beta-D-fructose 6-phosphate. It functions in the pathway carbohydrate degradation; pentose phosphate pathway; D-glyceraldehyde 3-phosphate and beta-D-fructose 6-phosphate from D-ribose 5-phosphate and D-xylulose 5-phosphate (non-oxidative stage): step 2/3. In terms of biological role, transaldolase is important for the balance of metabolites in the pentose-phosphate pathway. The polypeptide is Probable transaldolase (Citrifermentans bemidjiense (strain ATCC BAA-1014 / DSM 16622 / JCM 12645 / Bem) (Geobacter bemidjiensis)).